The following is a 252-amino-acid chain: MSAPRTCYGIIPARYASSRFPGKPLADILGRPMFWHVYDRARRCAAFDEVALATDDARIADAANVLGVPCVMTAEHHPSGTDRVHEAAMRLGVADDAVVVNIQGDEPALDPRMLDQLVAPFADASVRVATLAMALSAQEAQSPDRVKVVVAANGDALYFSRADIPFVRDGDVGGDTAGRLGHIGLYAFRMEALRRFTQLPPSRLEQTEKLEQLRLLENGIAIRVVPTTYRTHGVDRPEDIDVIINLLRENDG.

It belongs to the KdsB family.

The protein resides in the cytoplasm. The catalysed reaction is 3-deoxy-alpha-D-manno-oct-2-ulosonate + CTP = CMP-3-deoxy-beta-D-manno-octulosonate + diphosphate. It participates in nucleotide-sugar biosynthesis; CMP-3-deoxy-D-manno-octulosonate biosynthesis; CMP-3-deoxy-D-manno-octulosonate from 3-deoxy-D-manno-octulosonate and CTP: step 1/1. It functions in the pathway bacterial outer membrane biogenesis; lipopolysaccharide biosynthesis. Functionally, activates KDO (a required 8-carbon sugar) for incorporation into bacterial lipopolysaccharide in Gram-negative bacteria. This Nitratidesulfovibrio vulgaris (strain DP4) (Desulfovibrio vulgaris) protein is 3-deoxy-manno-octulosonate cytidylyltransferase.